A 273-amino-acid polypeptide reads, in one-letter code: Large ribosomal subunit protein uL2cz/uL2cy (273 aa).

Disordered stretches follow at residues 1 to 22 (MAIH…DSQV) and 223 to 254 (MNPV…PALG).

Belongs to the universal ribosomal protein uL2 family. In terms of assembly, part of the 50S ribosomal subunit.

Its subcellular location is the plastid. The protein resides in the chloroplast. The sequence is that of Large ribosomal subunit protein uL2cz/uL2cy (rpl2-A) from Drimys granadensis.